A 192-amino-acid chain; its full sequence is uncharacterized protein (192 aa).

This is an uncharacterized protein from Magallana gigas (Pacific oyster).